We begin with the raw amino-acid sequence, 576 residues long: (+)-alpha-terpineol synthase (576 aa).

Residues Arg-286, Asp-323, Asp-327, Arg-466, and Asn-469 each contribute to the (2E)-geranyl diphosphate site. Mg(2+) contacts are provided by Asp-323 and Asp-327. The short motif at 323–327 is the DDXXD motif element; sequence DDVYD. Positions 469, 473, and 477 each coordinate Mg(2+).

The protein belongs to the terpene synthase family. Tpsb subfamily. It depends on Mg(2+) as a cofactor. Mn(2+) serves as cofactor.

The enzyme catalyses (2E,6E)-farnesyl diphosphate = beta-bisabolene + diphosphate. The catalysed reaction is (2E)-geranyl diphosphate + H2O = (R)-alpha-terpineol + diphosphate. It carries out the reaction (2E)-geranyl diphosphate = (4S)-limonene + diphosphate. It functions in the pathway secondary metabolite biosynthesis; terpenoid biosynthesis. In terms of biological role, monoterpene synthase which catalyzes the conversion of (2E)-geranyl diphosphate (GPP) to (R)-alpha-terpineol and (4S)-limonene, as well as small quantities of linalool, myrcene, (-)-alpha-pinene, (+)-sabinene and geraniol. To a lower extent, catalyzes the conversion of (2E,6E)-farnesyl diphosphate (FPP) to beta-bisabolene. This Santalum album (White sandalwood) protein is (+)-alpha-terpineol synthase.